The sequence spans 155 residues: Small ribosomal subunit protein uS7 (155 aa).

It belongs to the universal ribosomal protein uS7 family. Part of the 30S ribosomal subunit. Contacts proteins S9 and S11.

One of the primary rRNA binding proteins, it binds directly to 16S rRNA where it nucleates assembly of the head domain of the 30S subunit. Is located at the subunit interface close to the decoding center, probably blocks exit of the E-site tRNA. In Mesoplasma florum (strain ATCC 33453 / NBRC 100688 / NCTC 11704 / L1) (Acholeplasma florum), this protein is Small ribosomal subunit protein uS7.